The primary structure comprises 226 residues: SURF1-like protein (226 aa).

Helical transmembrane passes span threonine 3–serine 23 and leucine 199–tyrosine 219.

It belongs to the SURF1 family.

Its subcellular location is the cell membrane. The protein is SURF1-like protein of Rickettsia felis (strain ATCC VR-1525 / URRWXCal2) (Rickettsia azadi).